An 88-amino-acid chain; its full sequence is uncharacterized protein (88 aa).

This is an uncharacterized protein from Lymantria dispar multicapsid nuclear polyhedrosis virus (LdMNPV).